Reading from the N-terminus, the 460-residue chain is Light-independent protochlorophyllide reductase subunit N (460 aa).

Residues C22, C47, and C107 each contribute to the [4Fe-4S] cluster site.

It belongs to the BchN/ChlN family. In terms of assembly, protochlorophyllide reductase is composed of three subunits; ChlL, ChlN and ChlB. Forms a heterotetramer of two ChlB and two ChlN subunits. Requires [4Fe-4S] cluster as cofactor.

It localises to the plastid. Its subcellular location is the cyanelle. It carries out the reaction chlorophyllide a + oxidized 2[4Fe-4S]-[ferredoxin] + 2 ADP + 2 phosphate = protochlorophyllide a + reduced 2[4Fe-4S]-[ferredoxin] + 2 ATP + 2 H2O. Its pathway is porphyrin-containing compound metabolism; chlorophyll biosynthesis (light-independent). Its function is as follows. Component of the dark-operative protochlorophyllide reductase (DPOR) that uses Mg-ATP and reduced ferredoxin to reduce ring D of protochlorophyllide (Pchlide) to form chlorophyllide a (Chlide). This reaction is light-independent. The NB-protein (ChlN-ChlB) is the catalytic component of the complex. The protein is Light-independent protochlorophyllide reductase subunit N of Cyanophora paradoxa.